A 1129-amino-acid polypeptide reads, in one-letter code: A-kinase anchor protein 11 (1129 aa).

Residues 1–12 are compositionally biased toward basic residues; it reads MQKMQCHLRRPL. A disordered region spans residues 1–21; that stretch reads MQKMQCHLRRPLHSSSSFSSQ. 2 positions are modified to phosphothreonine: threonine 251 and threonine 363. Disordered regions lie at residues 354–376, 394–416, and 434–455; these read IRDR…QTSS, EFAP…SENE, and SEEV…SEHS. The span at 404–416 shows a compositional bias: polar residues; sequence PHNSSVGSLSENE. Phosphoserine occurs at positions 434, 439, and 440. Basic and acidic residues predominate over residues 442–455; the sequence is GEEHPEMDVKSEHS. The residue at position 595 (serine 595) is a Phosphoserine. Residue threonine 742 is modified to Phosphothreonine. Serine 835 carries the phosphoserine modification. The tract at residues 905–918 is PKA-RII binding region; the sequence is LAEKIVAEAIEKAE. The segment at 962–1061 is disordered; that stretch reads SKEVEDFQST…QEDGAEGLQP (100 aa). Residues 968–995 show a composition bias toward polar residues; that stretch reads FQSTESLGSQQMNLSVGEDSTGSWSNLS. Residues 1002 to 1011 show a composition bias toward basic and acidic residues; that stretch reads DESSSFHHLS. Residues 1012–1028 are compositionally biased toward low complexity; sequence ESSNGNSSSWSSLGLEG. Residues 1033–1042 are compositionally biased toward polar residues; that stretch reads NNLSFPTSDS. The span at 1043–1056 shows a compositional bias: acidic residues; sequence DGPDDRESEQEDGA.

In terms of tissue distribution, expressed in brain and testis.

It is found in the peroxisome. Functionally, binds to type II regulatory subunits of protein kinase A and anchors/targets them. The chain is A-kinase anchor protein 11 (Akap11) from Rattus norvegicus (Rat).